The primary structure comprises 1356 residues: Pleckstrin homology domain-containing family H member 1 (1356 aa).

Positions 27-172 (FRLQASKIRE…QDALEDLRMT (146 aa)) form a coiled coil. Disordered regions lie at residues 179–203 (VVPE…EQDS), 256–314 (HLQK…PKVR), and 354–414 (LHSP…PPLH). Composition is skewed to polar residues over residues 194–203 (PSDQPVEQDS), 256–265 (HLQKEGSPSQ), and 285–297 (VTAQ…GTKT). A coiled-coil region spans residues 359-407 (SSKSEARAKVREEAEKMEMEALPPSGKQEERESLKSRRGELEDVELENK). 2 stretches are compositionally biased toward basic and acidic residues: residues 362–377 (SEAR…KMEM) and 385–399 (KQEE…RGEL). At S451 the chain carries Phosphoserine. 2 consecutive PH domains span residues 572 to 666 (ALEK…SLLK) and 681 to 790 (KPTV…VAAG). S739 is subject to Phosphoserine. The MyTH4 domain occupies 826–980 (YSQEGLCASL…PSRMEVVSIL (155 aa)). Residues 991–1327 (FSIPVHFANG…NHCSATVNLS (337 aa)) form the FERM domain.

This Mus musculus (Mouse) protein is Pleckstrin homology domain-containing family H member 1 (Plekhh1).